A 280-amino-acid polypeptide reads, in one-letter code: Probable cell division protein WhiA (280 aa).

The segment at residues 247–279 is a DNA-binding region (H-T-H motif); the sequence is SLEQIANFFFTKYNIKISRSGIQHFSVNLKKLC.

Belongs to the WhiA family.

Functionally, involved in cell division and chromosome segregation. In Mycoplasma genitalium (strain ATCC 33530 / DSM 19775 / NCTC 10195 / G37) (Mycoplasmoides genitalium), this protein is Probable cell division protein WhiA.